Here is a 251-residue protein sequence, read N- to C-terminus: Triosephosphate isomerase (251 aa).

Residue 9-11 (NWK) participates in substrate binding. H96 acts as the Electrophile in catalysis. The Proton acceptor role is filled by E168. Residues G174, S214, and 235–236 (GG) contribute to the substrate site.

The protein belongs to the triosephosphate isomerase family. As to quaternary structure, homodimer.

Its subcellular location is the cytoplasm. The enzyme catalyses D-glyceraldehyde 3-phosphate = dihydroxyacetone phosphate. The protein operates within carbohydrate biosynthesis; gluconeogenesis. It functions in the pathway carbohydrate degradation; glycolysis; D-glyceraldehyde 3-phosphate from glycerone phosphate: step 1/1. Involved in the gluconeogenesis. Catalyzes stereospecifically the conversion of dihydroxyacetone phosphate (DHAP) to D-glyceraldehyde-3-phosphate (G3P). The polypeptide is Triosephosphate isomerase (Porphyromonas gingivalis (strain ATCC BAA-308 / W83)).